We begin with the raw amino-acid sequence, 112 residues long: Small ribosomal subunit protein bS16 (112 aa).

This sequence belongs to the bacterial ribosomal protein bS16 family.

This Aquifex aeolicus (strain VF5) protein is Small ribosomal subunit protein bS16.